Consider the following 165-residue polypeptide: Protein SprT (165 aa).

The SprT-like domain occupies 20-162 (EKLAQANLKL…YRCVHCGEQL (143 aa)). A Zn(2+)-binding site is contributed by His78. Glu79 is a catalytic residue. His82 is a binding site for Zn(2+).

This sequence belongs to the SprT family. Zn(2+) is required as a cofactor.

It is found in the cytoplasm. In Escherichia coli (strain SMS-3-5 / SECEC), this protein is Protein SprT.